A 288-amino-acid polypeptide reads, in one-letter code: 4-diphosphocytidyl-2-C-methyl-D-erythritol kinase (288 aa).

Lys-8 is an active-site residue. An ATP-binding site is contributed by 92–102 (PVAAGMAGGST). Asp-134 is a catalytic residue.

The protein belongs to the GHMP kinase family. IspE subfamily.

It catalyses the reaction 4-CDP-2-C-methyl-D-erythritol + ATP = 4-CDP-2-C-methyl-D-erythritol 2-phosphate + ADP + H(+). It participates in isoprenoid biosynthesis; isopentenyl diphosphate biosynthesis via DXP pathway; isopentenyl diphosphate from 1-deoxy-D-xylulose 5-phosphate: step 3/6. Functionally, catalyzes the phosphorylation of the position 2 hydroxy group of 4-diphosphocytidyl-2C-methyl-D-erythritol. The sequence is that of 4-diphosphocytidyl-2-C-methyl-D-erythritol kinase from Clostridium perfringens (strain SM101 / Type A).